The following is a 719-amino-acid chain: ATP-dependent RNA helicase SUV3 homolog, mitochondrial (719 aa).

The transit peptide at 1-18 (MRRASGVLRVLGGLTQRC) directs the protein to the mitochondrion. A disordered region spans residues 16–42 (QRCSTSSTPSSSRFPAMNSRRKRNSVR). In terms of domain architecture, Helicase ATP-binding spans 181 to 319 (EARSVTRKIF…PAAIDIVKKL (139 aa)). 194-201 (GPTNSGKT) contributes to the ATP binding site. The Helicase C-terminal domain maps to 343 to 499 (KAIESYSNIE…PTYDQIETFS (157 aa)). The tract at residues 662-692 (SKAAGSSKSSEGKRENPSKSEREKPNKRSSI) is disordered. Residues 671–687 (SEGKRENPSKSEREKPN) show a composition bias toward basic and acidic residues. Residues 693 to 717 (LEALLKRADISEDDLEQLREELNKN) are a coiled coil.

This sequence belongs to the helicase family. Mg(2+) serves as cofactor. The cofactor is Mn(2+).

The protein localises to the mitochondrion matrix. Its subcellular location is the nucleus. The catalysed reaction is ATP + H2O = ADP + phosphate + H(+). Functionally, ATPase and DNA/RNA helicase able to unwind DNA/DNA, DNA/RNA and RNA/RNA duplexes in the 5'-3' direction. The polypeptide is ATP-dependent RNA helicase SUV3 homolog, mitochondrial (Caenorhabditis elegans).